A 471-amino-acid polypeptide reads, in one-letter code: Cytochrome P450 monooxygenase afvE (471 aa).

The helical transmembrane segment at 265–285 (IIFYHFELSTPVAFFIIFAVY) threads the bilayer. Cys410 contacts heme.

The protein belongs to the cytochrome P450 family. Requires heme as cofactor.

The protein resides in the membrane. The protein operates within secondary metabolite biosynthesis. Cytochrome P450 monooxygenase; part of the gene cluster that mediates the biosynthesis of aflavarin, a bicoumarin that exhibits anti-insectan activity against the fungivorous beetle C.hemipterus. This is Cytochrome P450 monooxygenase afvE from Aspergillus flavus (strain ATCC 200026 / FGSC A1120 / IAM 13836 / NRRL 3357 / JCM 12722 / SRRC 167).